The sequence spans 198 residues: Recombination protein RecR (198 aa).

A C4-type zinc finger spans residues 57–72; it reads CSVCGHITENDPCYIC. One can recognise a Toprim domain in the interval 80–175; that stretch reads SVICVVEDDK…KVTRLAQGLS (96 aa).

Belongs to the RecR family.

Its function is as follows. May play a role in DNA repair. It seems to be involved in an RecBC-independent recombinational process of DNA repair. It may act with RecF and RecO. This chain is Recombination protein RecR, found in Staphylococcus aureus (strain Mu3 / ATCC 700698).